Consider the following 257-residue polypeptide: Pimeloyl-[acyl-carrier protein] methyl ester esterase (257 aa).

In terms of domain architecture, AB hydrolase-1 spans His-15–His-241. Substrate-binding positions include Trp-22, Ser-82–Leu-83, and Phe-143–Gln-147. Ser-82 acts as the Nucleophile in catalysis. Residues Asp-207 and His-235 contribute to the active site. His-235 provides a ligand contact to substrate.

It belongs to the AB hydrolase superfamily. Carboxylesterase BioH family. As to quaternary structure, monomer.

Its subcellular location is the cytoplasm. It catalyses the reaction 6-carboxyhexanoyl-[ACP] methyl ester + H2O = 6-carboxyhexanoyl-[ACP] + methanol + H(+). It participates in cofactor biosynthesis; biotin biosynthesis. Functionally, the physiological role of BioH is to remove the methyl group introduced by BioC when the pimeloyl moiety is complete. It allows to synthesize pimeloyl-ACP via the fatty acid synthetic pathway through the hydrolysis of the ester bonds of pimeloyl-ACP esters. This Klebsiella pneumoniae subsp. pneumoniae (strain ATCC 700721 / MGH 78578) protein is Pimeloyl-[acyl-carrier protein] methyl ester esterase.